We begin with the raw amino-acid sequence, 127 residues long: MEKKIALIAHDKKKDDLVNFVKQNHLFLSKFKLIATGTTGSRIQQATDLTVVKYKSGPMGGDQQIGAEVAEGNVLAIFFFRDPLTSQPHEPDVSALIRLCDVHKIPLATNVKTAEILIKGLESLILR.

An MGS-like domain is found at 1 to 127; sequence MEKKIALIAH…IKGLESLILR (127 aa). Residues H10, K14, 36–39, and 56–57 each bind substrate; these read TGTT and SG. D62 acts as the Proton donor/acceptor in catalysis. H89 lines the substrate pocket.

This sequence belongs to the methylglyoxal synthase family.

The catalysed reaction is dihydroxyacetone phosphate = methylglyoxal + phosphate. In terms of biological role, catalyzes the formation of methylglyoxal from dihydroxyacetone phosphate. The sequence is that of Methylglyoxal synthase from Borreliella afzelii (strain PKo) (Borrelia afzelii).